The chain runs to 344 residues: GTPase Obg (344 aa).

Residues 1 to 159 (MKFLDLAKVY…RTIWLRLKLI (159 aa)) enclose the Obg domain. Residues 160 to 326 (ADVGLLGLPN…VLRVLRARVD (167 aa)) enclose the OBG-type G domain. Residues 166–173 (GLPNAGKS), 191–195 (FTTLV), 212–215 (DIPG), 279–282 (NKID), and 307–309 (SGV) contribute to the GTP site. Mg(2+) contacts are provided by Ser-173 and Thr-193.

The protein belongs to the TRAFAC class OBG-HflX-like GTPase superfamily. OBG GTPase family. In terms of assembly, monomer. The cofactor is Mg(2+).

The protein resides in the cytoplasm. Its function is as follows. An essential GTPase which binds GTP, GDP and possibly (p)ppGpp with moderate affinity, with high nucleotide exchange rates and a fairly low GTP hydrolysis rate. Plays a role in control of the cell cycle, stress response, ribosome biogenesis and in those bacteria that undergo differentiation, in morphogenesis control. This chain is GTPase Obg, found in Jannaschia sp. (strain CCS1).